Here is a 337-residue protein sequence, read N- to C-terminus: Regulator of RpoS (337 aa).

One can recognise a Response regulatory domain in the interval 9-123 (QILIVEDEQV…NRLREMVFAC (115 aa)). Aspartate 58 bears the 4-aspartylphosphate mark.

The protein belongs to the RssB family. In terms of assembly, binds to RpoS. In terms of processing, phosphorylated. Phosphorylation stimulates the interaction with RpoS and, therefore, the proteolysis of RpoS.

Regulates the turnover of the sigma S factor (RpoS) by promoting its proteolysis in exponentially growing cells. Acts by binding and delivering RpoS to the ClpXP protease. RssB is not co-degraded with RpoS, but is released from the complex and can initiate a new cycle of RpoS recognition and degradation. In Shigella flexneri, this protein is Regulator of RpoS.